We begin with the raw amino-acid sequence, 261 residues long: Type III pantothenate kinase (261 aa).

7–14 (EQGNTNTM) serves as a coordination point for ATP. 108-111 (GADR) contributes to the substrate binding site. D110 acts as the Proton acceptor in catalysis. Position 130 (D130) interacts with K(+). T133 is an ATP binding site. T187 contacts substrate.

Belongs to the type III pantothenate kinase family. As to quaternary structure, homodimer. Requires NH4(+) as cofactor. K(+) serves as cofactor.

The protein resides in the cytoplasm. The catalysed reaction is (R)-pantothenate + ATP = (R)-4'-phosphopantothenate + ADP + H(+). It functions in the pathway cofactor biosynthesis; coenzyme A biosynthesis; CoA from (R)-pantothenate: step 1/5. Catalyzes the phosphorylation of pantothenate (Pan), the first step in CoA biosynthesis. The sequence is that of Type III pantothenate kinase from Caulobacter vibrioides (strain ATCC 19089 / CIP 103742 / CB 15) (Caulobacter crescentus).